The following is an 86-amino-acid chain: Acyl carrier protein (86 aa).

The Carrier domain maps to 10–85 (DKIEQKVIEM…DVIKYIKERQ (76 aa)). Position 45 is an O-(pantetheine 4'-phosphoryl)serine (Ser45).

It belongs to the acyl carrier protein (ACP) family. 4'-phosphopantetheine is transferred from CoA to a specific serine of apo-ACP by AcpS. This modification is essential for activity because fatty acids are bound in thioester linkage to the sulfhydryl of the prosthetic group.

It is found in the cytoplasm. It functions in the pathway lipid metabolism; fatty acid biosynthesis. Carrier of the growing fatty acid chain in fatty acid biosynthesis. This is Acyl carrier protein from Rickettsia africae (strain ESF-5).